A 271-amino-acid chain; its full sequence is 5'-AMP-activated protein kinase subunit beta-2 (271 aa).

The interval 1 to 46 (MGNTTSERVSGERHGAKAARAEGGGHGPGKEHKIMVGSTDDPSVFS) is disordered. S38 is subject to Phosphoserine; by ULK1. T39 is subject to Phosphothreonine; by ULK1. S68 carries the post-translational modification Phosphoserine; by ULK1. A phosphoserine mark is found at S94 and S107. T147 bears the Phosphothreonine mark. A phosphoserine mark is found at S157, S169, S173, and S183.

The protein belongs to the 5'-AMP-activated protein kinase beta subunit family. In terms of assembly, AMPK is a heterotrimer of an alpha catalytic subunit (PRKAA1 or PRKAA2), a beta (PRKAB1 or PRKAB2) and a gamma non-catalytic subunits (PRKAG1, PRKAG2 or PRKAG3). Phosphorylated when associated with the catalytic subunit (PRKAA1 or PRKAA2). Phosphorylated by ULK1 and ULK2; leading to negatively regulate AMPK activity and suggesting the existence of a regulatory feedback loop between ULK1, ULK2 and AMPK.

Its function is as follows. Non-catalytic subunit of AMP-activated protein kinase (AMPK), an energy sensor protein kinase that plays a key role in regulating cellular energy metabolism. In response to reduction of intracellular ATP levels, AMPK activates energy-producing pathways and inhibits energy-consuming processes: inhibits protein, carbohydrate and lipid biosynthesis, as well as cell growth and proliferation. AMPK acts via direct phosphorylation of metabolic enzymes, and by longer-term effects via phosphorylation of transcription regulators. Also acts as a regulator of cellular polarity by remodeling the actin cytoskeleton; probably by indirectly activating myosin. Beta non-catalytic subunit acts as a scaffold on which the AMPK complex assembles, via its C-terminus that bridges alpha (PRKAA1 or PRKAA2) and gamma subunits (PRKAG1, PRKAG2 or PRKAG3). This is 5'-AMP-activated protein kinase subunit beta-2 (Prkab2) from Mus musculus (Mouse).